Consider the following 154-residue polypeptide: Catabolic 3-dehydroquinase (154 aa).

The Proton acceptor role is filled by Tyr-25. Asn-79, His-85, and Asp-92 together coordinate substrate. His-105 functions as the Proton donor in the catalytic mechanism. Substrate is bound by residues Ile-106–Ser-107 and Arg-116.

This sequence belongs to the type-II 3-dehydroquinase family. Homododecamer. Adopts a ring-like structure, composed of an arrangement of two hexameric rings stacked on top of one another.

The enzyme catalyses 3-dehydroquinate = 3-dehydroshikimate + H2O. Its pathway is aromatic compound metabolism; 3,4-dihydroxybenzoate biosynthesis; 3,4-dihydroxybenzoate from 3-dehydroquinate: step 1/2. Is involved in the catabolism of quinate. Allows the utilization of quinate as carbon source via the beta-ketoadipate pathway. The sequence is that of Catabolic 3-dehydroquinase from Botryotinia fuckeliana (strain B05.10) (Noble rot fungus).